Consider the following 333-residue polypeptide: Holliday junction branch migration complex subunit RuvB (333 aa).

A large ATPase domain (RuvB-L) region spans residues methionine 1 to tyrosine 182. ATP-binding positions include leucine 21, arginine 22, glycine 63, lysine 66, threonine 67, threonine 68, glutamate 129–phenylalanine 131, arginine 172, tyrosine 182, and arginine 219. Threonine 67 provides a ligand contact to Mg(2+). The interval threonine 183–glutamine 253 is small ATPAse domain (RuvB-S). Positions lysine 256–valine 333 are head domain (RuvB-H). DNA-binding residues include arginine 311 and arginine 316.

This sequence belongs to the RuvB family. As to quaternary structure, homohexamer. Forms an RuvA(8)-RuvB(12)-Holliday junction (HJ) complex. HJ DNA is sandwiched between 2 RuvA tetramers; dsDNA enters through RuvA and exits via RuvB. An RuvB hexamer assembles on each DNA strand where it exits the tetramer. Each RuvB hexamer is contacted by two RuvA subunits (via domain III) on 2 adjacent RuvB subunits; this complex drives branch migration. In the full resolvosome a probable DNA-RuvA(4)-RuvB(12)-RuvC(2) complex forms which resolves the HJ.

It localises to the cytoplasm. The catalysed reaction is ATP + H2O = ADP + phosphate + H(+). In terms of biological role, the RuvA-RuvB-RuvC complex processes Holliday junction (HJ) DNA during genetic recombination and DNA repair, while the RuvA-RuvB complex plays an important role in the rescue of blocked DNA replication forks via replication fork reversal (RFR). RuvA specifically binds to HJ cruciform DNA, conferring on it an open structure. The RuvB hexamer acts as an ATP-dependent pump, pulling dsDNA into and through the RuvAB complex. RuvB forms 2 homohexamers on either side of HJ DNA bound by 1 or 2 RuvA tetramers; 4 subunits per hexamer contact DNA at a time. Coordinated motions by a converter formed by DNA-disengaged RuvB subunits stimulates ATP hydrolysis and nucleotide exchange. Immobilization of the converter enables RuvB to convert the ATP-contained energy into a lever motion, pulling 2 nucleotides of DNA out of the RuvA tetramer per ATP hydrolyzed, thus driving DNA branch migration. The RuvB motors rotate together with the DNA substrate, which together with the progressing nucleotide cycle form the mechanistic basis for DNA recombination by continuous HJ branch migration. Branch migration allows RuvC to scan DNA until it finds its consensus sequence, where it cleaves and resolves cruciform DNA. This Bacillus cereus (strain B4264) protein is Holliday junction branch migration complex subunit RuvB.